The sequence spans 340 residues: UDP-3-O-(3-hydroxymyristoyl)glucosamine N-acyltransferase (340 aa).

Catalysis depends on histidine 239, which acts as the Proton acceptor.

It belongs to the transferase hexapeptide repeat family. LpxD subfamily. Homotrimer.

It catalyses the reaction a UDP-3-O-[(3R)-3-hydroxyacyl]-alpha-D-glucosamine + a (3R)-hydroxyacyl-[ACP] = a UDP-2-N,3-O-bis[(3R)-3-hydroxyacyl]-alpha-D-glucosamine + holo-[ACP] + H(+). It carries out the reaction UDP-3-O-[(3R)-3-hydroxytetradecanoyl]-alpha-D-glucosamine + (3R)-hydroxytetradecanoyl-[ACP] = UDP-2-N,3-O-bis[(3R)-3-hydroxytetradecanoyl]-alpha-D-glucosamine + holo-[ACP] + H(+). Its pathway is glycolipid biosynthesis; lipid IV(A) biosynthesis; lipid IV(A) from (3R)-3-hydroxytetradecanoyl-[acyl-carrier-protein] and UDP-N-acetyl-alpha-D-glucosamine: step 3/6. In terms of biological role, catalyzes the N-acylation of UDP-3-O-(hydroxytetradecanoyl)glucosamine using 3-hydroxytetradecanoyl-ACP as the acyl donor. Is involved in the biosynthesis of lipid A, a phosphorylated glycolipid that anchors the lipopolysaccharide to the outer membrane of the cell. In Wigglesworthia glossinidia brevipalpis, this protein is UDP-3-O-(3-hydroxymyristoyl)glucosamine N-acyltransferase.